The sequence spans 111 residues: Dynein light chain Tctex-type (111 aa).

The protein belongs to the dynein light chain Tctex-type family.

Its subcellular location is the cytoplasm. It localises to the cytoskeleton. Acts as a non-catalytic accessory component of a dynein complex. This Schizosaccharomyces pombe (strain 972 / ATCC 24843) (Fission yeast) protein is Dynein light chain Tctex-type (dlc1).